The primary structure comprises 249 residues: Nicotinamide/nicotinic acid mononucleotide adenylyltransferase (249 aa).

Positions 34 and 35 each coordinate NAD(+). 2 residues coordinate ATP: His-42 and Lys-75. Positions 112, 141, 143, 154, 173, and 204 each coordinate NAD(+). An ATP-binding site is contributed by 209–210 (SR).

The protein belongs to the eukaryotic NMN adenylyltransferase family. Requires a divalent metal cation as cofactor.

It carries out the reaction beta-nicotinamide D-ribonucleotide + ATP + H(+) = diphosphate + NAD(+). The enzyme catalyses nicotinate beta-D-ribonucleotide + ATP + H(+) = deamido-NAD(+) + diphosphate. It participates in cofactor biosynthesis; NAD(+) biosynthesis; deamido-NAD(+) from nicotinate D-ribonucleotide: step 1/1. The protein operates within cofactor biosynthesis; NAD(+) biosynthesis; NAD(+) from nicotinamide D-ribonucleotide: step 1/1. Its function is as follows. Catalyzes the formation of NAD(+) from nicotinamide mononucleotide (NMN) and ATP. Can also use the deamidated form; nicotinic acid mononucleotide (NaMN) as substrate. This is Nicotinamide/nicotinic acid mononucleotide adenylyltransferase from Oryza sativa subsp. japonica (Rice).